We begin with the raw amino-acid sequence, 224 residues long: Cytidylate kinase (224 aa).

Position 11 to 19 (11 to 19 (GPAAAGKST)) interacts with ATP.

This sequence belongs to the cytidylate kinase family. Type 1 subfamily.

Its subcellular location is the cytoplasm. It catalyses the reaction CMP + ATP = CDP + ADP. The enzyme catalyses dCMP + ATP = dCDP + ADP. This is Cytidylate kinase from Bacillus velezensis (strain DSM 23117 / BGSC 10A6 / LMG 26770 / FZB42) (Bacillus amyloliquefaciens subsp. plantarum).